An 875-amino-acid polypeptide reads, in one-letter code: Transcription factor tenR (875 aa).

The zn(2)-C6 fungal-type DNA-binding region spans 16–44 (CSECRRRKIRCDRGFPCGPCRKSLPALSC). Disordered stretches follow at residues 54-73 (AASA…PKVN), 136-172 (DHEK…GVNP), and 620-642 (PHED…TGSR). Composition is skewed to polar residues over residues 153-168 (PGST…SHSA) and 627-642 (SIQS…TGSR).

It localises to the nucleus. Transcription factor that positively regulates the expression of the genes that mediate the biosynthesis of tenellin-type 2-pyridones, iron-chelating compounds involved in iron stress tolerance, competition with the natural competitor fungus Metarhizium robertsii and insect hosts infection. The sequence is that of Transcription factor tenR from Beauveria bassiana (strain ARSEF 2860) (White muscardine disease fungus).